Consider the following 498-residue polypeptide: Protein MGF 505-5R (498 aa).

The protein belongs to the asfivirus MGF 505 family.

Its function is as follows. Plays a role in virus cell tropism, and may be required for efficient virus replication in macrophages. The protein is Protein MGF 505-5R of Ornithodoros (relapsing fever ticks).